A 336-amino-acid polypeptide reads, in one-letter code: Formimidoylglutamase (336 aa).

The Mn(2+) site is built by H129, D160, H162, D164, D257, and D259.

This sequence belongs to the arginase family. Mn(2+) serves as cofactor.

It carries out the reaction N-formimidoyl-L-glutamate + H2O = formamide + L-glutamate. It participates in amino-acid degradation; L-histidine degradation into L-glutamate; L-glutamate from N-formimidoyl-L-glutamate (hydrolase route): step 1/1. Functionally, catalyzes the conversion of N-formimidoyl-L-glutamate to L-glutamate and formamide. This Vibrio vulnificus (strain YJ016) protein is Formimidoylglutamase.